Reading from the N-terminus, the 284-residue chain is Expansin-A17 (284 aa).

An N-terminal signal peptide occupies residues 1 to 21 (MASSWNNPAIFLAAALAVATA). The 115-residue stretch at 71–185 (GGACGYVSND…RRVPCQRTGG (115 aa)) folds into the Expansin-like EG45 domain. In terms of domain architecture, Expansin-like CBD spans 195–279 (YWLLLYVMNV…WWITGLCYQG (85 aa)).

The protein belongs to the expansin family. Expansin A subfamily. Expressed in roots.

It localises to the secreted. Its subcellular location is the cell wall. The protein localises to the membrane. In terms of biological role, may cause loosening and extension of plant cell walls by disrupting non-covalent bonding between cellulose microfibrils and matrix glucans. No enzymatic activity has been found. May be required for rapid internodal elongation in deepwater rice during submergence. This chain is Expansin-A17 (EXPA17), found in Oryza sativa subsp. japonica (Rice).